Here is a 1237-residue protein sequence, read N- to C-terminus: Zinc finger protein ZFAT (1237 aa).

Residues 12-35 form a C2H2-type 1 zinc finger; sequence FMCKCCNLFSPNQSELVTHVSEKH. The segment at 50-110 is disordered; the sequence is RPLNTPENPN…GPLATEEGSR (61 aa). Positions 70-81 are enriched in basic residues; that stretch reads MKRKRGRPKGST. The segment at 116-141 adopts a C2H2-type 2; degenerate zinc-finger fold; it reads LECSKCCRKFSNTRQLRKHICIIVLN. The interval 147 to 188 is disordered; it reads GDAGNESDLDLEKTYKEDDREKASKRPRAQKTEKVQKISGKE. A compositionally biased stretch (basic and acidic residues) spans 156 to 186; it reads DLEKTYKEDDREKASKRPRAQKTEKVQKISG. C2H2-type zinc fingers lie at residues 271–293, 299–321, 326–349, 354–377, 404–426, 432–454, and 458–481; these read FTCEYCNKVFKFKHSLQAHLRIH, YKCSQCSYASAIKANLNVHLRKH, FACDYCSFTCLSKGHLKVHIERVH, QHCRFCKKKYSDVKNLIKHIRDMH, YDCHICERKFKNELDRDRHMLVH, FACELCGHGATKYQALELHVRKH, and YVCALCLKKFVSSIRLRSHIREVH. Positions 273, 276, 289, 293, 301, 304, 317, 321, 328, 331, 344, 349, 356, 359, 372, 377, 406, 409, 422, and 426 each coordinate Zn(2+). 4 residues coordinate Zn(2+): Cys-460, Cys-463, His-476, and His-481. 2 disordered regions span residues 551-576 and 601-671; these read VPGDAHAPPPGPLATPQSESSSLSPC and SDTS…CLRA. Residues 565-574 are compositionally biased toward polar residues; the sequence is TPQSESSSLS. Residues 601–617 are compositionally biased toward low complexity; it reads SDTSSAEPPAAAEATSD. C2H2-type zinc fingers lie at residues 737 to 759, 765 to 788, 793 to 817, and 825 to 848; these read LECEYCGKLFWYQVHFDMHVRTH, YYCSQCHYSSITKNCLKRHVIQKH, LKCPTDGCDYSTPDKYKLQAHLKVH, and YSCPVCEKSFSEDRLIKSHIKTNH. Zn(2+)-binding residues include Cys-767, Cys-770, His-783, His-788, Cys-795, Cys-800, His-813, His-817, Cys-827, Cys-830, His-843, His-848, Cys-877, Cys-880, His-894, His-898, Cys-906, Cys-909, His-922, His-926, Cys-934, Cys-937, His-950, and Leu-953. The C2H2-type 14; degenerate zinc finger occupies 875–898; that stretch reads MKCPYCDFYFMKNGSDLQRHIWAH. C2H2-type zinc fingers lie at residues 904–926, 932–954, 961–983, 989–1012, and 1036–1059; these read FKCSLCEYATRSKSNLKAHMNRH, HLCDMCGKKFKSKGTLKSHKLLH, FKCTVCDYTAAQKPQLLRHMEQH, FRCAHCHYSCNISGSLKRHYNRKH, and LKCPVCSFVYGTKWEFNRHLKNKH.

Detected in spleen and thymus but not in liver, muscle, heart, kidney, brain, bone marrow or pancreas. Expressed in CD19+, CD4+ and CD8+ lymphocytes but not in CD11b+ lymphocytes or peritoneal macrophages (at protein level).

The protein resides in the nucleus. It is found in the cytoplasm. It localises to the cytosol. Its function is as follows. May be involved in transcriptional regulation. Overexpression causes down-regulation of a number of genes involved in the immune response. Some genes are also up-regulated. The chain is Zinc finger protein ZFAT (Zfat) from Mus musculus (Mouse).